Consider the following 221-residue polypeptide: Imidazole glycerol phosphate synthase subunit HisH (221 aa).

The Glutamine amidotransferase type-1 domain occupies 9-221; sequence DVVIIDTGCA…QILGNFLKMQ (213 aa). Cysteine 84 serves as the catalytic Nucleophile. Residues histidine 202 and glutamate 204 contribute to the active site.

As to quaternary structure, heterodimer of HisH and HisF.

The protein resides in the cytoplasm. It carries out the reaction 5-[(5-phospho-1-deoxy-D-ribulos-1-ylimino)methylamino]-1-(5-phospho-beta-D-ribosyl)imidazole-4-carboxamide + L-glutamine = D-erythro-1-(imidazol-4-yl)glycerol 3-phosphate + 5-amino-1-(5-phospho-beta-D-ribosyl)imidazole-4-carboxamide + L-glutamate + H(+). The catalysed reaction is L-glutamine + H2O = L-glutamate + NH4(+). It functions in the pathway amino-acid biosynthesis; L-histidine biosynthesis; L-histidine from 5-phospho-alpha-D-ribose 1-diphosphate: step 5/9. Its function is as follows. IGPS catalyzes the conversion of PRFAR and glutamine to IGP, AICAR and glutamate. The HisH subunit catalyzes the hydrolysis of glutamine to glutamate and ammonia as part of the synthesis of IGP and AICAR. The resulting ammonia molecule is channeled to the active site of HisF. The protein is Imidazole glycerol phosphate synthase subunit HisH of Shewanella oneidensis (strain ATCC 700550 / JCM 31522 / CIP 106686 / LMG 19005 / NCIMB 14063 / MR-1).